The following is a 257-amino-acid chain: Acetylglutamate kinase (257 aa).

Substrate-binding positions include 43-44, Arg-65, and Asn-157; that span reads GG. ATP is bound by residues 180 to 185 and 208 to 210; these read DVSGIL and IIT.

This sequence belongs to the acetylglutamate kinase family. ArgB subfamily. Homodimer.

It localises to the cytoplasm. It carries out the reaction N-acetyl-L-glutamate + ATP = N-acetyl-L-glutamyl 5-phosphate + ADP. It participates in amino-acid biosynthesis; L-arginine biosynthesis; N(2)-acetyl-L-ornithine from L-glutamate: step 2/4. In terms of biological role, catalyzes the ATP-dependent phosphorylation of N-acetyl-L-glutamate. In Photorhabdus laumondii subsp. laumondii (strain DSM 15139 / CIP 105565 / TT01) (Photorhabdus luminescens subsp. laumondii), this protein is Acetylglutamate kinase.